Here is a 419-residue protein sequence, read N- to C-terminus: Serine hydroxymethyltransferase (419 aa).

(6S)-5,6,7,8-tetrahydrofolate-binding positions include Leu-121 and 125-127; that span reads GHL. Position 230 is an N6-(pyridoxal phosphate)lysine (Lys-230). 355–357 contacts (6S)-5,6,7,8-tetrahydrofolate; that stretch reads SPF.

It belongs to the SHMT family. In terms of assembly, homodimer. Pyridoxal 5'-phosphate is required as a cofactor.

It is found in the cytoplasm. It catalyses the reaction (6R)-5,10-methylene-5,6,7,8-tetrahydrofolate + glycine + H2O = (6S)-5,6,7,8-tetrahydrofolate + L-serine. It functions in the pathway one-carbon metabolism; tetrahydrofolate interconversion. Its pathway is amino-acid biosynthesis; glycine biosynthesis; glycine from L-serine: step 1/1. Catalyzes the reversible interconversion of serine and glycine with tetrahydrofolate (THF) serving as the one-carbon carrier. This reaction serves as the major source of one-carbon groups required for the biosynthesis of purines, thymidylate, methionine, and other important biomolecules. Also exhibits THF-independent aldolase activity toward beta-hydroxyamino acids, producing glycine and aldehydes, via a retro-aldol mechanism. This Alkalilimnicola ehrlichii (strain ATCC BAA-1101 / DSM 17681 / MLHE-1) protein is Serine hydroxymethyltransferase.